Reading from the N-terminus, the 225-residue chain is Ribonuclease 3 (225 aa).

The RNase III domain occupies 7–129 (IPRLCRTLGY…IIGAIYLDSD (123 aa)). Glu-42 contacts Mg(2+). Asp-46 is a catalytic residue. Residues Asp-115 and Glu-118 each contribute to the Mg(2+) site. Glu-118 is an active-site residue. In terms of domain architecture, DRBM spans 155–225 (DPKTLLQEHL…AAQVLELIKK (71 aa)).

It belongs to the ribonuclease III family. In terms of assembly, homodimer. Mg(2+) is required as a cofactor.

The protein resides in the cytoplasm. It catalyses the reaction Endonucleolytic cleavage to 5'-phosphomonoester.. Digests double-stranded RNA. Involved in the processing of primary rRNA transcript to yield the immediate precursors to the large and small rRNAs (23S and 16S). Processes some mRNAs, and tRNAs when they are encoded in the rRNA operon. Processes pre-crRNA and tracrRNA of type II CRISPR loci if present in the organism. The chain is Ribonuclease 3 from Shewanella piezotolerans (strain WP3 / JCM 13877).